The sequence spans 745 residues: Polyribonucleotide nucleotidyltransferase (745 aa).

Mg(2+)-binding residues include D487 and D493. A KH domain is found at 554-613 (PSSTTVKIDKDKIKDIIGPGGKIIKEICETSNAKIDISDDGTVSIYASDRDKIKIALDKI). In terms of domain architecture, S1 motif spans 623 to 691 (GEIFNGTVMK…NKGKAKLTIK (69 aa)). The disordered stretch occupies residues 693–732 (AYKDHSSNNTKQKNNVKDDSESEQRRDTSKKRTWNEDNNT). Basic and acidic residues predominate over residues 707–719 (NVKDDSESEQRRD).

The protein belongs to the polyribonucleotide nucleotidyltransferase family. The cofactor is Mg(2+).

The protein localises to the cytoplasm. The enzyme catalyses RNA(n+1) + phosphate = RNA(n) + a ribonucleoside 5'-diphosphate. In terms of biological role, involved in mRNA degradation. Catalyzes the phosphorolysis of single-stranded polyribonucleotides processively in the 3'- to 5'-direction. The chain is Polyribonucleotide nucleotidyltransferase from Rickettsia prowazekii (strain Madrid E).